The primary structure comprises 161 residues: Thy-1 membrane glycoprotein (161 aa).

A signal peptide spans 1–19; that stretch reads MNPVISITLLLSVLQMSRG. Gln-20 bears the Pyrrolidone carboxylic acid mark. One can recognise an Ig-like V-type domain in the interval 20-126; the sequence is QRVISLTACL…NKTINVIRDK (107 aa). Disulfide bonds link Cys-28/Cys-130 and Cys-38/Cys-104. The N-linked (GlcNAc...) (complex) asparagine; alternate glycan is linked to Asn-42. N-linked (GlcNAc...) (high mannose) asparagine; alternate glycosylation is present at Asn-42. Asn-42 carries an N-linked (GlcNAc...) asparagine; alternate glycan. Ser-82 bears the Phosphoserine mark. Asn-93 carries an N-linked (GlcNAc...) (complex) asparagine; alternate glycan. N-linked (GlcNAc...) asparagine; alternate glycosylation is present at Asn-93. Asn-117 is a glycosylation site (N-linked (GlcNAc...) (high mannose) asparagine; in brain; alternate). An N-linked (GlcNAc...) (hybrid) asparagine; in brain; alternate glycan is attached at Asn-117. A lipid anchor (GPI-anchor amidated cysteine) is attached at Cys-130. Positions 131-161 are cleaved as a propeptide — removed in mature form; it reads GGISLLVQNTSWLLLLLLSLSFLQATDFISL.

Glycosylation is tissue specific. Sialylation of N-glycans at Asn-93 in brain and at Asn-42, Asn-93 and Asn-117 in thymus. As to expression, abundant in lymphoid tissues.

The protein resides in the cell membrane. Its function is as follows. May play a role in cell-cell or cell-ligand interactions during synaptogenesis and other events in the brain. This is Thy-1 membrane glycoprotein (Thy1) from Rattus norvegicus (Rat).